A 142-amino-acid polypeptide reads, in one-letter code: Large ribosomal subunit protein uL13 (142 aa).

This sequence belongs to the universal ribosomal protein uL13 family. As to quaternary structure, part of the 50S ribosomal subunit.

Functionally, this protein is one of the early assembly proteins of the 50S ribosomal subunit, although it is not seen to bind rRNA by itself. It is important during the early stages of 50S assembly. In Caldicellulosiruptor saccharolyticus (strain ATCC 43494 / DSM 8903 / Tp8T 6331), this protein is Large ribosomal subunit protein uL13.